Here is a 485-residue protein sequence, read N- to C-terminus: NADH-quinone oxidoreductase subunit N (485 aa).

Transmembrane regions (helical) follow at residues 8-28 (LIAL…MLSI), 35-55 (FLNA…LWFV), 71-91 (GFAM…CTFA), 105-125 (FYLL…ANHL), 127-147 (SLFL…GYAF), 159-179 (YTIL…LVYA), 203-223 (LLAG…LVPF), 235-255 (PAPV…GVVM), 271-291 (VVLA…ALSQ), 297-317 (LLGY…IALQ), 326-346 (VGVY…VVSL), 373-393 (AAVM…LGFI), 408-430 (WWLV…RVAV), and 455-475 (IVVL…QPLI).

This sequence belongs to the complex I subunit 2 family. In terms of assembly, NDH-1 is composed of 13 different subunits. Subunits NuoA, H, J, K, L, M, N constitute the membrane sector of the complex.

Its subcellular location is the cell inner membrane. It carries out the reaction a quinone + NADH + 5 H(+)(in) = a quinol + NAD(+) + 4 H(+)(out). Functionally, NDH-1 shuttles electrons from NADH, via FMN and iron-sulfur (Fe-S) centers, to quinones in the respiratory chain. The immediate electron acceptor for the enzyme in this species is believed to be ubiquinone. Couples the redox reaction to proton translocation (for every two electrons transferred, four hydrogen ions are translocated across the cytoplasmic membrane), and thus conserves the redox energy in a proton gradient. This Escherichia coli O1:K1 / APEC protein is NADH-quinone oxidoreductase subunit N.